Here is a 360-residue protein sequence, read N- to C-terminus: DNA replication and repair protein RecF (360 aa).

Residue 30 to 37 (GQNGSGKT) participates in ATP binding.

Belongs to the RecF family.

It is found in the cytoplasm. Functionally, the RecF protein is involved in DNA metabolism; it is required for DNA replication and normal SOS inducibility. RecF binds preferentially to single-stranded, linear DNA. It also seems to bind ATP. This is DNA replication and repair protein RecF from Shewanella baltica (strain OS185).